The chain runs to 103 residues: MSGRGKGGKGLGKGGAKRHRKILRDNIQGITKPAIRRLARRGGVKRISAMIYEETRGVLKSFLESVIRDAVTYTEHAKRKTVTSLDVVYALKRQGRTLYGFGG.

Positions 1–14 (MSGRGKGGKGLGKG) are enriched in gly residues. Positions 1 to 20 (MSGRGKGGKGLGKGGAKRHR) are disordered. The residue at position 6 (K6) is an N6-acetyl-N6-methyllysine; alternate. 3 positions are modified to N6-methyllysine; alternate: K6, K9, and K13. K13 is modified (N6-acetyl-N6-methyllysine; alternate). Residues 17–21 (KRHRK) mediate DNA binding. At K92 the chain carries N6-glutaryllysine.

It belongs to the histone H4 family. The nucleosome is a histone octamer containing two molecules each of H2A, H2B, H3 and H4 assembled in one H3-H4 heterotetramer and two H2A-H2B heterodimers. The octamer wraps approximately 147 bp of DNA. Post-translationally, glutarylation at Lys-92 (H4K91glu) destabilizes nucleosomes by promoting dissociation of the H2A-H2B dimers from nucleosomes.

The protein resides in the nucleus. It is found in the chromosome. In terms of biological role, core component of nucleosome. Nucleosomes wrap and compact DNA into chromatin, limiting DNA accessibility to the cellular machineries which require DNA as a template. Histones thereby play a central role in transcription regulation, DNA repair, DNA replication and chromosomal stability. DNA accessibility is regulated via a complex set of post-translational modifications of histones, also called histone code, and nucleosome remodeling. The chain is Histone H4.2 (hhfB) from Emericella nidulans (strain FGSC A4 / ATCC 38163 / CBS 112.46 / NRRL 194 / M139) (Aspergillus nidulans).